A 373-amino-acid polypeptide reads, in one-letter code: Secondary metabolism regulator laeA (373 aa).

Positions 55–81 (ERDPAAGRWHANGSPSINSTSSKNPDR) are disordered. The segment covering 67–77 (GSPSINSTSSK) has biased composition (polar residues).

It belongs to the methyltransferase superfamily. LaeA methyltransferase family. Component of the heterotrimeric velvet complex composed of laeA, veA and velB; VeA acting as a bridging protein between laeA and velB.

The protein localises to the nucleus. It catalyses the reaction L-methionyl-[protein] + S-adenosyl-L-methionine = S-methyl-L-methionyl-[protein] + S-adenosyl-L-homocysteine. In terms of biological role, methyltransferase that performs automethylation. No other methyl-accepting substrate has been identified yet. Component of the velvet transcription factor complex that acts as a global regulator for secondary metabolite gene expression. Positively controls expression of 20% to 40% of major classes of secondary metabolite biosynthesis genes such as nonribosomal peptide synthetases, polyketide synthases, and P450 monooxygenases. Controls the expression of the gliotoxin gene cluster. Controls the expression of the fumitremorgin, fumagillin, and pseurotin gene clusters, where genes for fumagillin and pseurotin are physically intertwined in a single supercluster. Regulates the biosynthetic genes required for endocrocin production. Secondary metabolites under the transcriptional regulation of laeA are necessary for inhibition of angiogenesis during invasive infection in mice. Controls the expression of cell surface rodA, a hydrophobin that acts as an antiphagocytic molecule. Also regulates the expression of genes involved in conidial biosynthesis. This is Secondary metabolism regulator laeA from Aspergillus fumigatus (strain ATCC MYA-4609 / CBS 101355 / FGSC A1100 / Af293) (Neosartorya fumigata).